Reading from the N-terminus, the 341-residue chain is Phosphoribosylformylglycinamidine cyclo-ligase (341 aa).

The protein belongs to the AIR synthase family.

It is found in the cytoplasm. The catalysed reaction is 2-formamido-N(1)-(5-O-phospho-beta-D-ribosyl)acetamidine + ATP = 5-amino-1-(5-phospho-beta-D-ribosyl)imidazole + ADP + phosphate + H(+). It participates in purine metabolism; IMP biosynthesis via de novo pathway; 5-amino-1-(5-phospho-D-ribosyl)imidazole from N(2)-formyl-N(1)-(5-phospho-D-ribosyl)glycinamide: step 2/2. In Lachnospira eligens (strain ATCC 27750 / DSM 3376 / VPI C15-48 / C15-B4) (Eubacterium eligens), this protein is Phosphoribosylformylglycinamidine cyclo-ligase.